A 312-amino-acid chain; its full sequence is tRNA dimethylallyltransferase (312 aa).

12–19 (GPTAIGKS) lines the ATP pocket. Residue 14–19 (TAIGKS) participates in substrate binding. Interaction with substrate tRNA stretches follow at residues 38–41 (DSKL) and 162–166 (QRVLR).

Belongs to the IPP transferase family. As to quaternary structure, monomer. It depends on Mg(2+) as a cofactor.

It carries out the reaction adenosine(37) in tRNA + dimethylallyl diphosphate = N(6)-dimethylallyladenosine(37) in tRNA + diphosphate. Catalyzes the transfer of a dimethylallyl group onto the adenine at position 37 in tRNAs that read codons beginning with uridine, leading to the formation of N6-(dimethylallyl)adenosine (i(6)A). The protein is tRNA dimethylallyltransferase of Buchnera aphidicola subsp. Cinara cedri (strain Cc).